Consider the following 668-residue polypeptide: Endoplasmic reticulum oxidoreductin-1 (668 aa).

Positions 1-22 are cleaved as a signal peptide; the sequence is MKPASRLFYLSLFALWSPEAQC. Disulfide bonds link C79–C413, C89–C94, C150–C352, and C416–C419. Residues 116-142 are disordered; it reads KLEGPRAKHPGKSVQKEEPKRPLQGKL. Residues R186, T188, W199, S282, and H285 each contribute to the FAD site. 2 N-linked (GlcNAc...) asparagine glycosylation sites follow: N298 and N307. An FAD-binding site is contributed by R314. The N-linked (GlcNAc...) asparagine glycan is linked to N406. The active-site Nucleophile is C416. Residue C419 is part of the active site. N-linked (GlcNAc...) asparagine glycosylation is present at N443. Disordered regions lie at residues 488-519 and 554-597; these read VEES…DRAK and GVTP…DPNF. A compositionally biased stretch (polar residues) spans 494-509; the sequence is GQQPQSHEQIEGSENS. The segment covering 570-581 has biased composition (acidic residues); sequence DNNDDDDDDDEF.

The protein belongs to the EROs family. May function both as a monomer and a homodimer. Requires FAD as cofactor.

It localises to the endoplasmic reticulum membrane. In terms of biological role, essential oxidoreductase that oxidizes proteins in the endoplasmic reticulum to produce disulfide bonds. Acts by oxidizing directly pdi1 isomerase through a direct disulfide exchange. Does not act as a direct oxidant of folding substrate, but relies on pdi1 to transfer oxidizing equivalent. Does not oxidize all pdi related proteins, suggesting that it can discriminate between pdi1 and related proteins. Its reoxidation probably involves electron transfer to molecular oxygen via FAD. Acts independently of glutathione. May be responsible for a significant proportion of reactive oxygen species (ROS) in the cell, thereby being a source of oxidative stress. This chain is Endoplasmic reticulum oxidoreductin-1 (ero-1), found in Neurospora crassa (strain ATCC 24698 / 74-OR23-1A / CBS 708.71 / DSM 1257 / FGSC 987).